Here is a 415-residue protein sequence, read N- to C-terminus: Dynein assembly factor with WD repeat domains 1 (415 aa).

WD repeat units follow at residues 90–129 (AHIL…ELNT), 132–174 (GHRN…HTFR), 175–214 (GHTA…EVCT), 217–256 (GHSA…KVNI), 259–298 (GHCA…CVAT), 301–340 (GHDD…CIAK), 343–384 (GHEG…QVLE), and 386–415 (HTDE…RIWR).

It belongs to the WD repeat WDR69 family. As to quaternary structure, interacts with IFT46.

The protein resides in the cytoplasm. Its subcellular location is the cytoskeleton. The protein localises to the flagellum basal body. It is found in the flagellum axoneme. Its function is as follows. Required for axonemal dynein assembly and ciliary motility in ciliated organs, including Kupffer's vesicle, during embryogenesis. Facilitates the onset of robust cilia motility during development. In Macaca fascicularis (Crab-eating macaque), this protein is Dynein assembly factor with WD repeat domains 1 (DAW1).